A 449-amino-acid chain; its full sequence is Endoglucanase A (449 aa).

The tat-type signal signal peptide spans 1–31 (MSTRRTAAALLAAAAVAVGGLTALTTTAAQA). The CBM2 domain occupies 32-137 (APGCRVDYAV…SLNGTTCTGT (106 aa)). Cysteine 35 and cysteine 134 are oxidised to a cystine. Positions 127-170 (FSLNGTTCTGTVPTTSPTPTPTPTTPTPTPTPTPTPTPTVTPQP) are disordered. Low complexity predominate over residues 132–141 (TTCTGTVPTT). The tract at residues 139-168 (PTTSPTPTPTPTTPTPTPTPTPTPTPTVTP) is linker ('hinge') (Pro-Thr box). The segment covering 142–167 (SPTPTPTPTTPTPTPTPTPTPTPTVT) has biased composition (pro residues). Aspartate 247 is an active-site residue. 2 cysteine pairs are disulfide-bonded: cysteine 248–cysteine 291 and cysteine 390–cysteine 426. Aspartate 283 functions as the Proton donor in the catalytic mechanism. The active-site Nucleophile is the aspartate 423. Positions 438–449 (EIALEMARNARW) are catalytic.

The protein belongs to the glycosyl hydrolase 6 (cellulase B) family. Post-translationally, the linker region (also termed 'hinge') may be a potential site for proteolysis. Predicted to be exported by the Tat system. The position of the signal peptide cleavage has not been experimentally proven.

The catalysed reaction is Endohydrolysis of (1-&gt;4)-beta-D-glucosidic linkages in cellulose, lichenin and cereal beta-D-glucans.. Its function is as follows. The biological conversion of cellulose to glucose generally requires three types of hydrolytic enzymes: (1) Endoglucanases which cut internal beta-1,4-glucosidic bonds; (2) Exocellobiohydrolases that cut the disaccharide cellobiose from the non-reducing end of the cellulose polymer chain; (3) Beta-1,4-glucosidases which hydrolyze the cellobiose and other short cello-oligosaccharides to glucose. The chain is Endoglucanase A (cenA) from Cellulomonas fimi.